We begin with the raw amino-acid sequence, 137 residues long: Small ribosomal subunit protein uS11 (137 aa).

The interval 116 to 137 is disordered; the sequence is EDVTPIPHDGTRPKGGRRGRRV.

The protein belongs to the universal ribosomal protein uS11 family. Part of the 30S ribosomal subunit.

Functionally, located on the platform of the 30S subunit. The chain is Small ribosomal subunit protein uS11 from Pyrococcus furiosus (strain ATCC 43587 / DSM 3638 / JCM 8422 / Vc1).